The chain runs to 389 residues: MADGSKVFKKTSPDGKITVYLAKRDYVDHVEFVEPVDGMIVIDPEYQKEKKVFVTMTCAFRYGRDDMELIGLSFRKDIYVQSCQVHPPLPGEKKALTPLQEKLKAKLGANAFPFSFNMATNLPCSVTLQPGPEDSGKACGVDFEVKGFWGDDVEEKVSKKNVARLIIRKVQYAPETAGAAPHAEITKQFMMSDKPLQLEASLNKEIHYHGEPIIVNVKINNSTNKIVKKIKITVEQITDVVLYSLDKYTKVVCCEEMNDTVAANSAFTKAYQVTPLLANNTEKRGLALDGKLKHGDTNLASSTTLRPGMDKEVMGILVSYKIRVNLMASRGGILGDLISSDVSVELPLILMHPKPAEGTTSAEDVVIEEFARQKLQGEQDDDEDKEEAS.

This sequence belongs to the arrestin family. As to expression, retina and pineal gland.

Functionally, may play a role in an as yet undefined retina-specific signal transduction. Could bind to photoactivated-phosphorylated red/green opsins. In Lithobates pipiens (Northern leopard frog), this protein is Arrestin-C (arr3).